The chain runs to 284 residues: 2,3,4,5-tetrahydropyridine-2,6-dicarboxylate N-succinyltransferase (284 aa).

The substrate site is built by Arg111 and Asp148.

This sequence belongs to the transferase hexapeptide repeat family. Homotrimer.

It is found in the cytoplasm. It carries out the reaction (S)-2,3,4,5-tetrahydrodipicolinate + succinyl-CoA + H2O = (S)-2-succinylamino-6-oxoheptanedioate + CoA. The protein operates within amino-acid biosynthesis; L-lysine biosynthesis via DAP pathway; LL-2,6-diaminopimelate from (S)-tetrahydrodipicolinate (succinylase route): step 1/3. The protein is 2,3,4,5-tetrahydropyridine-2,6-dicarboxylate N-succinyltransferase of Brucella anthropi (strain ATCC 49188 / DSM 6882 / CCUG 24695 / JCM 21032 / LMG 3331 / NBRC 15819 / NCTC 12168 / Alc 37) (Ochrobactrum anthropi).